The chain runs to 576 residues: TATA box-binding protein-associated factor RNA polymerase I subunit B (576 aa).

The RRN7-type zinc finger occupies 6 to 39 (TGGYSEPCGQCAAVDWGVSDEGQFFCKSCHNVIE). Cys-13, Cys-16, Cys-31, and Cys-34 together coordinate Zn(2+). The B-reader stretch occupies residues 40-70 (KIREVEDVTSLHHKHGRISIVRKPKKKKHDS). A B-linker region spans residues 71-73 (ERE). Residues 74–246 (WLVCEGFQFI…FPAEMRMFGK (173 aa)) form an N-terminal cyclin fold region. Residues 137-157 (QSGSESDTQSHQSCYSEASSD) form a disordered region. Residues 247-357 (DVQIFRVLFF…IVAMKLLFKL (111 aa)) are C-terminal cyclin fold.

The protein belongs to the RRN7/TAF1B family.

Its subcellular location is the nucleus. It localises to the nucleolus. In terms of biological role, component of RNA polymerase I core factor complex that acts as a GTF2B/TFIIB-like factor and plays a key role in multiple steps during transcription initiation such as pre-initiation complex (PIC) assembly and postpolymerase recruitment events in polymerase I (Pol I) transcription. Binds rDNA promoters and plays a role in Pol I recruitment. This Danio rerio (Zebrafish) protein is TATA box-binding protein-associated factor RNA polymerase I subunit B (taf1b).